We begin with the raw amino-acid sequence, 55 residues long: Large ribosomal subunit protein bL33 (55 aa).

The protein belongs to the bacterial ribosomal protein bL33 family.

The protein is Large ribosomal subunit protein bL33 of Alcanivorax borkumensis (strain ATCC 700651 / DSM 11573 / NCIMB 13689 / SK2).